Here is a 226-residue protein sequence, read N- to C-terminus: Methylamine utilization ferredoxin-type protein MauM (226 aa).

4Fe-4S ferredoxin-type domains follow at residues 59–87 (PEPE…LASW), 95–127 (TPYF…PLLT), 136–172 (VAVL…LKQI), and 180–211 (QIPT…LLPR). Positions 67, 70, 73, 77, 105, 108, 113, 117, 145, 153, 156, 160, 189, 192, 195, and 199 each coordinate [4Fe-4S] cluster.

It functions in the pathway one-carbon metabolism; methylamine degradation. Involved in electron transfer. This Methylophilus methylotrophus (Bacterium W3A1) protein is Methylamine utilization ferredoxin-type protein MauM (mauM).